The chain runs to 551 residues: Cytochrome c lysine N-methyltransferase 1 (551 aa).

Positions 46 to 273 (DKIELLRVSS…PNTEVLITYK (228 aa)) constitute an SET domain. The SET-like stretch occupies residues 184–288 (IELLRQIYSA…LAMITKYGFD (105 aa)).

This sequence belongs to the class V-like SAM-binding methyltransferase superfamily.

Its subcellular location is the cytoplasm. It localises to the cytosol. It carries out the reaction L-lysyl-[cytochrome c] + S-adenosyl-L-methionine = N(6)-methyl-L-lysyl-[cytochrome c] + S-adenosyl-L-homocysteine + H(+). Functionally, methyltransferase which mediates trimethylation of cytochrome c (CYC1). The sequence is that of Cytochrome c lysine N-methyltransferase 1 (CTM1) from Candida glabrata (strain ATCC 2001 / BCRC 20586 / JCM 3761 / NBRC 0622 / NRRL Y-65 / CBS 138) (Yeast).